Reading from the N-terminus, the 377-residue chain is Lipoyl synthase, mitochondrial (377 aa).

Positions 98, 103, 109, 128, 132, 135, and 343 each coordinate [4Fe-4S] cluster. Residues 113–332 enclose the Radical SAM core domain; the sequence is KKSEATATIM…RDTALDMGFL (220 aa).

It belongs to the radical SAM superfamily. Lipoyl synthase family. [4Fe-4S] cluster serves as cofactor.

The protein resides in the mitochondrion. It catalyses the reaction [[Fe-S] cluster scaffold protein carrying a second [4Fe-4S](2+) cluster] + N(6)-octanoyl-L-lysyl-[protein] + 2 oxidized [2Fe-2S]-[ferredoxin] + 2 S-adenosyl-L-methionine + 4 H(+) = [[Fe-S] cluster scaffold protein] + N(6)-[(R)-dihydrolipoyl]-L-lysyl-[protein] + 4 Fe(3+) + 2 hydrogen sulfide + 2 5'-deoxyadenosine + 2 L-methionine + 2 reduced [2Fe-2S]-[ferredoxin]. It functions in the pathway protein modification; protein lipoylation via endogenous pathway; protein N(6)-(lipoyl)lysine from octanoyl-[acyl-carrier-protein]: step 2/2. Its function is as follows. Catalyzes the radical-mediated insertion of two sulfur atoms into the C-6 and C-8 positions of the octanoyl moiety bound to the lipoyl domains of lipoate-dependent enzymes, thereby converting the octanoylated domains into lipoylated derivatives. The protein is Lipoyl synthase, mitochondrial of Candida tropicalis (strain ATCC MYA-3404 / T1) (Yeast).